A 131-amino-acid polypeptide reads, in one-letter code: Large ribosomal subunit protein bL19 (131 aa).

Polar residues predominate over residues 1–11 (MEETMNNQEAP). The tract at residues 1–20 (MEETMNNQEAPETSEEETVA) is disordered.

The protein belongs to the bacterial ribosomal protein bL19 family.

Functionally, this protein is located at the 30S-50S ribosomal subunit interface and may play a role in the structure and function of the aminoacyl-tRNA binding site. This chain is Large ribosomal subunit protein bL19, found in Dehalococcoides mccartyi (strain ATCC BAA-2100 / JCM 16839 / KCTC 5957 / BAV1).